A 213-amino-acid polypeptide reads, in one-letter code: Cytidylate kinase (213 aa).

7–15 (GPAASGKGT) lines the ATP pocket.

It belongs to the cytidylate kinase family. Type 1 subfamily.

The protein localises to the cytoplasm. The catalysed reaction is CMP + ATP = CDP + ADP. The enzyme catalyses dCMP + ATP = dCDP + ADP. In Rhodospirillum rubrum (strain ATCC 11170 / ATH 1.1.1 / DSM 467 / LMG 4362 / NCIMB 8255 / S1), this protein is Cytidylate kinase.